Consider the following 874-residue polypeptide: Translation initiation factor IF-2 (874 aa).

Residues M1–S262 form a disordered region. A compositionally biased stretch (pro residues) spans S54–L63. The span at A83–R104 shows a compositional bias: basic and acidic residues. Positions S141–G222 are enriched in gly residues. Over residues L235–T244 the composition is skewed to polar residues. Basic and acidic residues predominate over residues H250 to S262. The region spanning N369–K538 is the tr-type G domain. Residues G378–T385 form a G1 region. G378–T385 contributes to the GTP binding site. The interval G403–H407 is G2. The interval D424 to G427 is G3. Residues D424–H428 and N478–D481 contribute to the GTP site. Residues N478–D481 are G4. Residues S514 to R516 form a G5 region.

The protein belongs to the TRAFAC class translation factor GTPase superfamily. Classic translation factor GTPase family. IF-2 subfamily.

It is found in the cytoplasm. Functionally, one of the essential components for the initiation of protein synthesis. Protects formylmethionyl-tRNA from spontaneous hydrolysis and promotes its binding to the 30S ribosomal subunits. Also involved in the hydrolysis of GTP during the formation of the 70S ribosomal complex. The protein is Translation initiation factor IF-2 of Leptospira interrogans serogroup Icterohaemorrhagiae serovar copenhageni (strain Fiocruz L1-130).